The following is a 175-amino-acid chain: NADH dehydrogenase [ubiquinone] 1 alpha subcomplex assembly factor 4 (175 aa).

Residue glycine 2 is the site of N-myristoyl glycine attachment. Serine 35 carries the post-translational modification Phosphoserine.

The protein belongs to the NDUFAF4 family. Binds calmodulin. Interacts with NDUFAF3. In terms of assembly, (Microbial infection) Interacts with the vesicular stomatitis virus matrix protein/M; the interaction inhibits viral propagation. Post-translationally, phosphorylated on serine. Prolactin stimulate serine phosphorylation.

Its subcellular location is the mitochondrion. It is found in the membrane. In terms of biological role, involved in the assembly of mitochondrial NADH:ubiquinone oxidoreductase complex (complex I). May be involved in cell proliferation and survival of hormone-dependent tumor cells. May be a regulator of breast tumor cell invasion. The protein is NADH dehydrogenase [ubiquinone] 1 alpha subcomplex assembly factor 4 of Homo sapiens (Human).